The following is a 336-amino-acid chain: uncharacterized protein (336 aa).

The protein belongs to the GppA/Ppx family.

This is an uncharacterized protein from Streptomyces coelicolor (strain ATCC BAA-471 / A3(2) / M145).